A 363-amino-acid chain; its full sequence is Alanine racemase (363 aa).

The active-site Proton acceptor; specific for D-alanine is Lys34. Lys34 bears the N6-(pyridoxal phosphate)lysine mark. Residue Arg129 participates in substrate binding. Tyr256 functions as the Proton acceptor; specific for L-alanine in the catalytic mechanism. Met304 serves as a coordination point for substrate.

Belongs to the alanine racemase family. The cofactor is pyridoxal 5'-phosphate.

The enzyme catalyses L-alanine = D-alanine. Its pathway is amino-acid biosynthesis; D-alanine biosynthesis; D-alanine from L-alanine: step 1/1. Functionally, catalyzes the interconversion of L-alanine and D-alanine. May also act on other amino acids. The polypeptide is Alanine racemase (alr) (Edwardsiella ictaluri (strain 93-146)).